The following is a 400-amino-acid chain: Leukosialin (400 aa).

A signal peptide spans 1–19 (MATLLLLLGVLVVSPDALG). Topologically, residues 20-253 (STTAVQTPTS…PFRNPDENSR (234 aa)) are extracellular. Threonine 21, threonine 22, threonine 26, and threonine 28 each carry an O-linked (GalNAc...) threonine glycan. 2 stretches are compositionally biased toward polar residues: residues 21–51 (TTAV…SITS) and 58–112 (TGDQ…TPHA). The disordered stretch occupies residues 21 to 224 (TTAVQTPTSG…SSGASGPQVS (204 aa)). Serine 29 and serine 35 each carry an O-linked (GalNAc...) serine glycan. Threonine 36 carries an O-linked (GalNAc...) threonine glycan. O-linked (GalNAc...) serine glycosylation is found at serine 37, serine 41, and serine 42. Residues threonine 46 and threonine 47 are each glycosylated (O-linked (GalNAc...) threonine). The O-linked (GalNAc...) serine glycan is linked to serine 48. O-linked (GalNAc...) threonine glycosylation is found at threonine 50, threonine 58, and threonine 69. Residues serine 99 and serine 103 are each glycosylated (O-linked (GalNAc...) serine). O-linked (GalNAc...) threonine glycosylation is found at threonine 109 and threonine 113. Residue serine 114 is glycosylated (O-linked (GalNAc...) serine). Composition is skewed to polar residues over residues 121 to 164 (TANS…SRGT) and 172 to 182 (ATVSLETSKGT). O-linked (GalNAc...) threonine glycans are attached at residues threonine 136, threonine 137, threonine 173, and threonine 178. The span at 196 to 211 (TSTGTTGPPVTMTTGS) shows a compositional bias: low complexity. Residues 212–224 (LEPSSGASGPQVS) are compositionally biased toward polar residues. Asparagine 239 is a glycosylation site (N-linked (GlcNAc...) asparagine). The chain crosses the membrane as a helical span at residues 254–276 (GMLPVAVLVALLAVIVLVALLLL). Over 277–400 (WRRRQKRRTG…EPEGGDGAAP (124 aa)) the chain is Cytoplasmic. The tract at residues 278–308 (RRRQKRRTGALVLSRGGKRNGVVDAWAGPAQ) is required for interaction with EZR, MSN and RDX and for co-localization to microvilli. The Nuclear localization signal motif lies at 282–296 (KRRTGALVLSRGGKR). Serine 291 is modified (phosphoserine). Over residues 320–332 (GGSGGDKGSGFPD) the composition is skewed to gly residues. Positions 320–400 (GGSGGDKGSG…EPEGGDGAAP (81 aa)) are disordered. Serine 336 is modified (phosphoserine). At threonine 341 the chain carries Phosphothreonine. Serine 351 is modified (phosphoserine). Serine 355 bears the Phosphoserine; by PKC/PRKCQ mark. 2 positions are modified to phosphoserine: serine 368 and serine 379.

As to quaternary structure, interacts with SIGLEC1. Monomer. Interacts with CTNNB1. Interacts with RDX (via FERM domain), EZR and MSN. In terms of processing, glycosylated; has a high content of sialic acid and O-linked carbohydrate structures. Phosphorylation at Ser-355 is regulated by chemokines, requires its association with ERM proteins (EZR, RDX and MSN) and is essential for its function in the regulation of T-cell trafficking to lymph nodes. Post-translationally, has a high content of sialic acid and O-linked carbohydrate structures. In terms of processing, cleavage by CTSG releases its extracellular domain and triggers its intramembrane proteolysis by gamma-secretase releasing the CD43 cytoplasmic tail chain (CD43-ct) which translocates to the nucleus. Sumoylated. In terms of tissue distribution, cell surface of thymocytes, T-lymphocytes, neutrophils, plasma cells and myelomas.

The protein resides in the membrane. It localises to the cell projection. Its subcellular location is the microvillus. It is found in the uropodium. The protein localises to the nucleus. The protein resides in the PML body. In terms of biological role, predominant cell surface sialoprotein of leukocytes which regulates multiple T-cell functions, including T-cell activation, proliferation, differentiation, trafficking and migration. Positively regulates T-cell trafficking to lymph-nodes via its association with ERM proteins (EZR, RDX and MSN). Negatively regulates Th2 cell differentiation and predisposes the differentiation of T-cells towards a Th1 lineage commitment. Promotes the expression of IFN-gamma by T-cells during T-cell receptor (TCR) activation of naive cells and induces the expression of IFN-gamma by CD4(+) T-cells and to a lesser extent by CD8(+) T-cells. Plays a role in preparing T-cells for cytokine sensing and differentiation into effector cells by inducing the expression of cytokine receptors IFNGR and IL4R, promoting IFNGR and IL4R signaling and by mediating the clustering of IFNGR with TCR. Acts as a major E-selectin ligand responsible for Th17 cell rolling on activated vasculature and recruitment during inflammation. Mediates Th17 cells, but not Th1 cells, adhesion to E-selectin. Acts as a T-cell counter-receptor for SIGLEC1. Its function is as follows. Protects cells from apoptotic signals, promoting cell survival. The polypeptide is Leukosialin (SPN) (Homo sapiens (Human)).